The following is a 266-amino-acid chain: Chymotrypsin-like elastase family member 1 (266 aa).

An N-terminal signal peptide occupies residues 1-16 (MLRFLVFATLVLYGHS). The propeptide at 17-26 (TQDFPETNAR) is activation peptide. The Peptidase S1 domain occupies 27-264 (VVGGTEAGRN…YISWINKTIA (238 aa)). C56 and C72 are disulfide-bonded. H71 serves as the catalytic Charge relay system. Residues D85, N87, Q90, and E95 each contribute to the Ca(2+) site. N87 carries N-linked (GlcNAc...) asparagine glycosylation. Catalysis depends on D119, which acts as the Charge relay system. 3 disulfides stabilise this stretch: C153–C220, C184–C200, and C210–C240. S214 functions as the Charge relay system in the catalytic mechanism. N-linked (GlcNAc...) asparagine glycans are attached at residues N241 and N260.

It belongs to the peptidase S1 family. Elastase subfamily. Ca(2+) serves as cofactor.

The protein localises to the secreted. The enzyme catalyses Hydrolysis of proteins, including elastin. Preferential cleavage: Ala-|-Xaa.. Functionally, serine proteases that hydrolyze many proteins in addition to elastin. The sequence is that of Chymotrypsin-like elastase family member 1 (CELA1) from Macaca fascicularis (Crab-eating macaque).